We begin with the raw amino-acid sequence, 258 residues long: Glutamate racemase (258 aa).

Residues 11-12 (DS) and 43-44 (YG) each bind substrate. The Proton donor/acceptor role is filled by Cys74. Substrate is bound at residue 75–76 (NT). Cys182 acts as the Proton donor/acceptor in catalysis. 183–184 (TH) is a substrate binding site.

This sequence belongs to the aspartate/glutamate racemases family.

The enzyme catalyses L-glutamate = D-glutamate. It participates in cell wall biogenesis; peptidoglycan biosynthesis. Functionally, provides the (R)-glutamate required for cell wall biosynthesis. This is Glutamate racemase from Leptospira borgpetersenii serovar Hardjo-bovis (strain JB197).